The following is a 375-amino-acid chain: Carbamoyl phosphate synthase small chain (375 aa).

Residues 1–180 (MSKALLVLED…DAYVVEPKGK (180 aa)) form a CPSase region. Residues Ser46, Gly232, and Gly234 each contribute to the L-glutamine site. Residues 184-375 (TVAALDLGIK…SFVELMAAQR (192 aa)) enclose the Glutamine amidotransferase type-1 domain. Cys260 serves as the catalytic Nucleophile. Positions 261, 264, 302, 304, and 305 each coordinate L-glutamine. Catalysis depends on residues His350 and Glu352.

This sequence belongs to the CarA family. As to quaternary structure, composed of two chains; the small (or glutamine) chain promotes the hydrolysis of glutamine to ammonia, which is used by the large (or ammonia) chain to synthesize carbamoyl phosphate. Tetramer of heterodimers (alpha,beta)4.

The enzyme catalyses hydrogencarbonate + L-glutamine + 2 ATP + H2O = carbamoyl phosphate + L-glutamate + 2 ADP + phosphate + 2 H(+). It catalyses the reaction L-glutamine + H2O = L-glutamate + NH4(+). It participates in amino-acid biosynthesis; L-arginine biosynthesis; carbamoyl phosphate from bicarbonate: step 1/1. Its pathway is pyrimidine metabolism; UMP biosynthesis via de novo pathway; (S)-dihydroorotate from bicarbonate: step 1/3. Small subunit of the glutamine-dependent carbamoyl phosphate synthetase (CPSase). CPSase catalyzes the formation of carbamoyl phosphate from the ammonia moiety of glutamine, carbonate, and phosphate donated by ATP, constituting the first step of 2 biosynthetic pathways, one leading to arginine and/or urea and the other to pyrimidine nucleotides. The small subunit (glutamine amidotransferase) binds and cleaves glutamine to supply the large subunit with the substrate ammonia. This is Carbamoyl phosphate synthase small chain from Mycobacterium leprae (strain TN).